The primary structure comprises 365 residues: Chorismate synthase (365 aa).

R46 contacts NADP(+). Residues 124-126 (RAS), G284, 299-303 (KPTPS), and R326 each bind FMN.

It belongs to the chorismate synthase family. The cofactor is FMNH2.

The catalysed reaction is 5-O-(1-carboxyvinyl)-3-phosphoshikimate = chorismate + phosphate. Its pathway is metabolic intermediate biosynthesis; chorismate biosynthesis; chorismate from D-erythrose 4-phosphate and phosphoenolpyruvate: step 7/7. In terms of biological role, catalyzes the anti-1,4-elimination of the C-3 phosphate and the C-6 proR hydrogen from 5-enolpyruvylshikimate-3-phosphate (EPSP) to yield chorismate, which is the branch point compound that serves as the starting substrate for the three terminal pathways of aromatic amino acid biosynthesis. This reaction introduces a second double bond into the aromatic ring system. In Pyrobaculum neutrophilum (strain DSM 2338 / JCM 9278 / NBRC 100436 / V24Sta) (Thermoproteus neutrophilus), this protein is Chorismate synthase.